The chain runs to 156 residues: Small ribosomal subunit protein uS7A/uS7B (156 aa).

The protein belongs to the universal ribosomal protein uS7 family. In terms of assembly, part of the 30S ribosomal subunit. Contacts proteins S9 and S11.

Functionally, one of the primary rRNA binding proteins, it binds directly to 16S rRNA where it nucleates assembly of the head domain of the 30S subunit. Is located at the subunit interface close to the decoding center, probably blocks exit of the E-site tRNA. In Cereibacter sphaeroides (strain ATCC 17029 / ATH 2.4.9) (Rhodobacter sphaeroides), this protein is Small ribosomal subunit protein uS7A/uS7B.